Here is a 453-residue protein sequence, read N- to C-terminus: Chromosomal replication initiator protein DnaA (453 aa).

The tract at residues 1-71 (MSEKEIWEKV…QAILFDVVGY (71 aa)) is domain I, interacts with DnaA modulators. Positions 71–114 (YEVKPHFITTEELANYSNNETATPKETTKPSTETTEDNHVLGRE) are domain II. Residues 115-331 (QFNAHNTFDT…GALTRLLAYS (217 aa)) form a domain III, AAA+ region region. Positions 159, 161, 162, and 163 each coordinate ATP. The interval 332–453 (QLLGKPITTE…ENLEKEIRNV (122 aa)) is domain IV, binds dsDNA.

Belongs to the DnaA family. Oligomerizes as a right-handed, spiral filament on DNA at oriC.

The protein resides in the cytoplasm. Plays an essential role in the initiation and regulation of chromosomal replication. ATP-DnaA binds to the origin of replication (oriC) to initiate formation of the DNA replication initiation complex once per cell cycle. Binds the DnaA box (a 9 base pair repeat at the origin) and separates the double-stranded (ds)DNA. Forms a right-handed helical filament on oriC DNA; dsDNA binds to the exterior of the filament while single-stranded (ss)DNA is stabiized in the filament's interior. The ATP-DnaA-oriC complex binds and stabilizes one strand of the AT-rich DNA unwinding element (DUE), permitting loading of DNA polymerase. After initiation quickly degrades to an ADP-DnaA complex that is not apt for DNA replication. Binds acidic phospholipids. The protein is Chromosomal replication initiator protein DnaA of Staphylococcus aureus (strain bovine RF122 / ET3-1).